Consider the following 225-residue polypeptide: PKHD-type hydroxylase YbiX (225 aa).

The region spanning 78 to 177 is the Fe2OG dioxygenase domain; the sequence is TLSTPLFNRY…RVASFMWIQS (100 aa). Residues His-96, Asp-98, and His-158 each contribute to the Fe cation site. Arg-168 contributes to the 2-oxoglutarate binding site.

It depends on Fe(2+) as a cofactor. L-ascorbate serves as cofactor.

This chain is PKHD-type hydroxylase YbiX, found in Escherichia fergusonii (strain ATCC 35469 / DSM 13698 / CCUG 18766 / IAM 14443 / JCM 21226 / LMG 7866 / NBRC 102419 / NCTC 12128 / CDC 0568-73).